Reading from the N-terminus, the 74-residue chain is UPF0435 protein Bcer98_0391 (74 aa).

This sequence belongs to the UPF0435 family.

This chain is UPF0435 protein Bcer98_0391, found in Bacillus cytotoxicus (strain DSM 22905 / CIP 110041 / 391-98 / NVH 391-98).